The following is a 328-amino-acid chain: Aspartate carbamoyltransferase catalytic subunit (328 aa).

Residues Arg55 and Thr56 each contribute to the carbamoyl phosphate site. Lys83 is a binding site for L-aspartate. The carbamoyl phosphate site is built by Arg105, His135, and Gln138. L-aspartate-binding residues include Arg176 and Arg230. 2 residues coordinate carbamoyl phosphate: Gly271 and Pro272.

This sequence belongs to the aspartate/ornithine carbamoyltransferase superfamily. ATCase family. As to quaternary structure, heterododecamer (2C3:3R2) of six catalytic PyrB chains organized as two trimers (C3), and six regulatory PyrI chains organized as three dimers (R2).

The enzyme catalyses carbamoyl phosphate + L-aspartate = N-carbamoyl-L-aspartate + phosphate + H(+). The protein operates within pyrimidine metabolism; UMP biosynthesis via de novo pathway; (S)-dihydroorotate from bicarbonate: step 2/3. Functionally, catalyzes the condensation of carbamoyl phosphate and aspartate to form carbamoyl aspartate and inorganic phosphate, the committed step in the de novo pyrimidine nucleotide biosynthesis pathway. This is Aspartate carbamoyltransferase catalytic subunit from Streptomyces griseus subsp. griseus (strain JCM 4626 / CBS 651.72 / NBRC 13350 / KCC S-0626 / ISP 5235).